The sequence spans 431 residues: Glutamate-1-semialdehyde 2,1-aminomutase (431 aa).

The residue at position 265 (K265) is an N6-(pyridoxal phosphate)lysine.

Belongs to the class-III pyridoxal-phosphate-dependent aminotransferase family. HemL subfamily. In terms of assembly, homodimer. The cofactor is pyridoxal 5'-phosphate.

Its subcellular location is the cytoplasm. It carries out the reaction (S)-4-amino-5-oxopentanoate = 5-aminolevulinate. It functions in the pathway porphyrin-containing compound metabolism; protoporphyrin-IX biosynthesis; 5-aminolevulinate from L-glutamyl-tRNA(Glu): step 2/2. In Vibrio campbellii (strain ATCC BAA-1116), this protein is Glutamate-1-semialdehyde 2,1-aminomutase.